Reading from the N-terminus, the 116-residue chain is NADH-ubiquinone oxidoreductase chain 3 (116 aa).

Transmembrane regions (helical) follow at residues 3–23, 56–76, and 85–105; these read LLMT…IVSF, FFLI…LLPL, and PLLT…GLIY.

It belongs to the complex I subunit 3 family.

Its subcellular location is the mitochondrion membrane. It catalyses the reaction a ubiquinone + NADH + 5 H(+)(in) = a ubiquinol + NAD(+) + 4 H(+)(out). Its function is as follows. Core subunit of the mitochondrial membrane respiratory chain NADH dehydrogenase (Complex I) that is believed to belong to the minimal assembly required for catalysis. Complex I functions in the transfer of electrons from NADH to the respiratory chain. The immediate electron acceptor for the enzyme is believed to be ubiquinone. The polypeptide is NADH-ubiquinone oxidoreductase chain 3 (MT-ND3) (Paralichthys olivaceus (Bastard halibut)).